Here is a 1005-residue protein sequence, read N- to C-terminus: DNA double-strand break repair Rad50 ATPase (1005 aa).

ATP is bound by residues lysine 14, 35-40, 62-64, and glutamine 134; these read GSGKSS and ITK. Coiled-coil stretches lie at residues 189 to 230, 292 to 321, 346 to 379, and 404 to 498; these read KENY…IEKL, LVDE…KQLE, LDTL…EIEK, and AVEY…LKEV. The 98-residue stretch at 457–554 folds into the Zinc-hook domain; the sequence is IEEKKKVLEN…DIEKLKKEID (98 aa). Zn(2+) contacts are provided by cysteine 502 and cysteine 505. 3 coiled-coil regions span residues 523-600, 656-692, and 800-834; these read TQLN…YVIN, KEKC…ELIE, and RQEL…LKEM.

It belongs to the SMC family. RAD50 subfamily. As to quaternary structure, homodimer. Forms a heterotetramer composed of two Mre11 subunits and two Rad50 subunits. Zn(2+) is required as a cofactor.

Part of the Rad50/Mre11 complex, which is involved in the early steps of DNA double-strand break (DSB) repair. The complex may facilitate opening of the processed DNA ends to aid in the recruitment of HerA and NurA. Rad50 controls the balance between DNA end bridging and DNA resection via ATP-dependent structural rearrangements of the Rad50/Mre11 complex. This Methanocaldococcus jannaschii (strain ATCC 43067 / DSM 2661 / JAL-1 / JCM 10045 / NBRC 100440) (Methanococcus jannaschii) protein is DNA double-strand break repair Rad50 ATPase.